Here is a 310-residue protein sequence, read N- to C-terminus: Homoserine kinase (310 aa).

91 to 101 contributes to the ATP binding site; the sequence is PIGSGLGSSAC.

Belongs to the GHMP kinase family. Homoserine kinase subfamily.

It localises to the cytoplasm. The enzyme catalyses L-homoserine + ATP = O-phospho-L-homoserine + ADP + H(+). The protein operates within amino-acid biosynthesis; L-threonine biosynthesis; L-threonine from L-aspartate: step 4/5. In terms of biological role, catalyzes the ATP-dependent phosphorylation of L-homoserine to L-homoserine phosphate. In Escherichia coli (strain K12 / MC4100 / BW2952), this protein is Homoserine kinase.